We begin with the raw amino-acid sequence, 736 residues long: Segment polarity protein dishevelled homolog DVL-2 (736 aa).

The region spanning 11–93 is the DIX domain; it reads VGETKVIYHL…RVVSWLVSSD (83 aa). Residues 93 to 255 are disordered; sequence DTPQPEVAPP…RMERTSSFSS (163 aa). Residues 111–122 show a composition bias toward pro residues; that stretch reads VPPPPPLPPLPP. The span at 159–171 shows a compositional bias: basic and acidic residues; it reads LRRDRPRRRDSSE. The span at 193–208 shows a compositional bias: low complexity; that stretch reads ESSSTLMTSELESTSL. A Phosphoserine modification is found at S211. Residues 218-230 show a composition bias toward polar residues; it reads SRFSSSTEQSSAS. Residues 232-244 show a composition bias toward basic residues; the sequence is LLKRHRRRRKQRP. The PDZ domain maps to 267–339; it reads TVTLNMEKYN…NDDAVRVLRD (73 aa). Residues 433-507 enclose the DEP domain; sequence PESGLEVRDR…SEQCYYVFGD (75 aa). Positions 558-568 are enriched in pro residues; sequence PHPYSPQPPPY. Positions 558–665 are disordered; that stretch reads PHPYSPQPPP…PNLRALPGLH (108 aa). 2 stretches are compositionally biased toward low complexity: residues 581–598 and 614–629; these read ASSQ…TRSD and SKSG…SRGG.

The protein belongs to the DSH family. As to quaternary structure, interacts through its PDZ domain with the C-terminal regions of VANGL1 and VANGL2. Interacts with Rac. Interacts with ARRB1; the interaction is enhanced by phosphorylation of DVL1. Can form large oligomers (via DIX domain). Interacts (via DIX domain) with DIXDC1 (via DIX domain). Interacts (via DEP domain) with AP2M1 and the AP-2 complex. Interacts with FAM105B/otulin. Interacts with DCDC2. Interacts (when phosphorylated) with FOXK1 and FOXK2; the interaction induces DVL2 nuclear translocation. Interacts with MAPK15. Interacts with PKD1 (via extracellular domain). Interacts with LMBR1L. Post-translationally, phosphorylated by CSNK1D. WNT3A induces DVL2 phosphorylation by CSNK1E and MARK kinases. In terms of processing, ubiquitinated via 'Lys-63'-linked polyubiquitin chains; leading to its autophagy-mediated degradation. Ubiquitous.

It is found in the cell membrane. Its subcellular location is the cytoplasm. The protein localises to the cytosol. The protein resides in the cytoplasmic vesicle. It localises to the nucleus. Functionally, plays a role in the signal transduction pathways mediated by multiple Wnt genes. Participates both in canonical and non-canonical Wnt signaling by binding to the cytoplasmic C-terminus of frizzled family members and transducing the Wnt signal to down-stream effectors. Promotes internalization and degradation of frizzled proteins upon Wnt signaling. In Mus musculus (Mouse), this protein is Segment polarity protein dishevelled homolog DVL-2 (Dvl2).